Consider the following 256-residue polypeptide: GTP cyclohydrolase FolE2 (256 aa).

Belongs to the GTP cyclohydrolase IV family.

It catalyses the reaction GTP + H2O = 7,8-dihydroneopterin 3'-triphosphate + formate + H(+). It participates in cofactor biosynthesis; 7,8-dihydroneopterin triphosphate biosynthesis; 7,8-dihydroneopterin triphosphate from GTP: step 1/1. Functionally, converts GTP to 7,8-dihydroneopterin triphosphate. This Caldicellulosiruptor bescii (strain ATCC BAA-1888 / DSM 6725 / KCTC 15123 / Z-1320) (Anaerocellum thermophilum) protein is GTP cyclohydrolase FolE2.